Reading from the N-terminus, the 93-residue chain is Small ribosomal subunit protein uS19 (93 aa).

It belongs to the universal ribosomal protein uS19 family.

Protein S19 forms a complex with S13 that binds strongly to the 16S ribosomal RNA. This chain is Small ribosomal subunit protein uS19, found in Brevibacillus brevis (strain 47 / JCM 6285 / NBRC 100599).